Reading from the N-terminus, the 527-residue chain is 2-isopropylmalate synthase (527 aa).

The region spanning Ile18–Val280 is the Pyruvate carboxyltransferase domain. The Mn(2+) site is built by Asp27, His215, His217, and Asn251. Positions Thr405 to Pro527 are regulatory domain.

Belongs to the alpha-IPM synthase/homocitrate synthase family. LeuA type 1 subfamily. As to quaternary structure, homodimer. Mn(2+) is required as a cofactor.

It is found in the cytoplasm. The enzyme catalyses 3-methyl-2-oxobutanoate + acetyl-CoA + H2O = (2S)-2-isopropylmalate + CoA + H(+). Its pathway is amino-acid biosynthesis; L-leucine biosynthesis; L-leucine from 3-methyl-2-oxobutanoate: step 1/4. Functionally, catalyzes the condensation of the acetyl group of acetyl-CoA with 3-methyl-2-oxobutanoate (2-ketoisovalerate) to form 3-carboxy-3-hydroxy-4-methylpentanoate (2-isopropylmalate). The sequence is that of 2-isopropylmalate synthase from Rhodopirellula baltica (strain DSM 10527 / NCIMB 13988 / SH1).